Here is a 669-residue protein sequence, read N- to C-terminus: DNA ligase (669 aa).

NAD(+) is bound at residue 35–39 (DFEYD). The segment at 52-71 (YPEWDSPDSPTHRVGSDKTE) is disordered. Basic and acidic residues predominate over residues 61–71 (PTHRVGSDKTE). NAD(+) is bound by residues 84–85 (SL) and Glu-115. The active-site N6-AMP-lysine intermediate is Lys-117. Residues Arg-138, Glu-175, Lys-290, and Lys-314 each contribute to the NAD(+) site. Cys-408, Cys-411, Cys-426, and Cys-432 together coordinate Zn(2+). Residues 590–669 (PVSARLAGKT…EEEFLRLIEE (80 aa)) enclose the BRCT domain.

This sequence belongs to the NAD-dependent DNA ligase family. LigA subfamily. It depends on Mg(2+) as a cofactor. Requires Mn(2+) as cofactor.

The enzyme catalyses NAD(+) + (deoxyribonucleotide)n-3'-hydroxyl + 5'-phospho-(deoxyribonucleotide)m = (deoxyribonucleotide)n+m + AMP + beta-nicotinamide D-nucleotide.. Its function is as follows. DNA ligase that catalyzes the formation of phosphodiester linkages between 5'-phosphoryl and 3'-hydroxyl groups in double-stranded DNA using NAD as a coenzyme and as the energy source for the reaction. It is essential for DNA replication and repair of damaged DNA. The protein is DNA ligase of Porphyromonas gingivalis (strain ATCC 33277 / DSM 20709 / CIP 103683 / JCM 12257 / NCTC 11834 / 2561).